A 67-amino-acid polypeptide reads, in one-letter code: Minor structural pilin EpdD (67 aa).

A propeptide spanning residues 1–13 (MSVALKKFFSKRG) is cleaved from the precursor. The QXSXEXXXL signature appears at 14–22 (QLSLEFSVL).

The N-terminus is cleaved by the prepilin peptidase EppA, which recognizes the class III signal sequence. Post-translationally, N-glycosylated. Glycosylation is AglB-dependent. The N-glycosylation does not occur unless the signal peptide has been cleaved first.

It localises to the secreted. The protein localises to the cell surface. It is found in the fimbrium. Minor component of the type IV-like pili. Essential for pili formation. This is Minor structural pilin EpdD from Methanococcus maripaludis (strain DSM 14266 / JCM 13030 / NBRC 101832 / S2 / LL).